Consider the following 510-residue polypeptide: GMP synthase [glutamine-hydrolyzing] (510 aa).

The region spanning 5 to 195 is the Glutamine amidotransferase type-1 domain; the sequence is LVLVIDFGGQ…LFKICGLKED (191 aa). The Nucleophile role is filled by C82. Active-site residues include H169 and E171. Positions 196 to 385 constitute a GMPS ATP-PPase domain; that stretch reads WSMSSFAKEK…LGIPHKLVWR (190 aa). 223-229 contributes to the ATP binding site; the sequence is SGGVDSS.

As to quaternary structure, homodimer.

The enzyme catalyses XMP + L-glutamine + ATP + H2O = GMP + L-glutamate + AMP + diphosphate + 2 H(+). The protein operates within purine metabolism; GMP biosynthesis; GMP from XMP (L-Gln route): step 1/1. Catalyzes the synthesis of GMP from XMP. This is GMP synthase [glutamine-hydrolyzing] from Clostridium acetobutylicum (strain ATCC 824 / DSM 792 / JCM 1419 / IAM 19013 / LMG 5710 / NBRC 13948 / NRRL B-527 / VKM B-1787 / 2291 / W).